The sequence spans 155 residues: Ribosomal RNA large subunit methyltransferase H (155 aa).

S-adenosyl-L-methionine is bound by residues L73, G104, and 123–128 (LSPLTL).

Belongs to the RNA methyltransferase RlmH family. In terms of assembly, homodimer.

It localises to the cytoplasm. It catalyses the reaction pseudouridine(1915) in 23S rRNA + S-adenosyl-L-methionine = N(3)-methylpseudouridine(1915) in 23S rRNA + S-adenosyl-L-homocysteine + H(+). Functionally, specifically methylates the pseudouridine at position 1915 (m3Psi1915) in 23S rRNA. The protein is Ribosomal RNA large subunit methyltransferase H of Pseudomonas aeruginosa (strain LESB58).